Here is a 227-residue protein sequence, read N- to C-terminus: Terpene cyclase ltmB (227 aa).

The next 7 membrane-spanning stretches (helical) occupy residues 20 to 40, 51 to 71, 76 to 96, 113 to 133, 135 to 155, 173 to 195, and 206 to 226; these read LAETFVTFMGLGWLINYVLMI, MALIPLCNNIAWELVYTIIYP, VELAAFIAGVTLNFLIMTSAA, AGLIIVAGILMCFTGHVALAM, IGPALAYSWGAVICQLALSIG, LWSSRFLGSCCAVGFAFLRWRYW, and LILWSLATFLVADLTYGVCLL.

The protein belongs to the paxB family.

The protein localises to the membrane. It participates in secondary metabolite biosynthesis. Functionally, terpene cyclase; part of the gene cluster that mediates the biosynthesis of lolitrems, indole-diterpene mycotoxins that are potent tremorgens in mammals, and are synthesized by clavicipitaceous fungal endophytes in association with their grass hosts. The geranylgeranyl diphosphate (GGPP) synthase ltmG is proposed to catalyze the first step in lolitrem biosynthesis. LtmG catalyzes a series of iterative condensations of isopentenyl diphosphate (IPP) with dimethylallyl diphosphate (DMAPP), geranyl diphosphate (GPP), and farnesyl diphosphate (FPP), to form GGPP. GGPP then condenses with indole-3-glycerol phosphate to form 3-geranylgeranylindole, an acyclic intermediate, to be incorporated into paxilline. Either ltmG or ltmC could be responsible for this step, as both are putative prenyl transferases. The FAD-dependent monooxygenase ltmM then catalyzes the epoxidation of the two terminal alkenes of the geranylgeranyl moiety, which is subsequently cyclized by ltmB, to paspaline. The cytochrome P450 monooxygenases ltmQ and ltmP can sequentially oxidize paspaline to terpendole E and terpendole F. Alternatively, ltmP converts paspaline to an intermediate which is oxidized by ltmQ to terpendole F. LtmF, ltmK, ltmE and ltmJ appear to be unique to the epichloe endophytes. The prenyltransferase ltmF is involved in the 27-hydroxyl-O-prenylation. The cytochrome P450 monooxygenase ltmK is required for the oxidative acetal ring formation. The multi-functional prenyltransferase ltmE is required for C20- and C21-prenylations of the indole ring of paspalanes and acts together with the cytochrome P450 monooxygenase ltmJ to yield lolitremanes by multiple oxidations and ring closures. The stereoisomer pairs of lolitriol and lolitrem N or lolitrem B and lolitrem F may be attributed to variations in the way in which ring closure can occur under the action of ltmJ. While the major product of this pathway is lolitrem B, the prenyl transferases and cytochrome P450 monooxygenases identified in this pathway have a remarkable versatility in their regio- and stereo-specificities to generate a diverse range of metabolites that are products of a metabolic grid rather than a linear pathway. The sequence is that of Terpene cyclase ltmB from Epichloe festucae var. lolii (Neotyphodium lolii).